The chain runs to 149 residues: Large ribosomal subunit protein bL9 (149 aa).

It belongs to the bacterial ribosomal protein bL9 family.

Its function is as follows. Binds to the 23S rRNA. In Xanthomonas campestris pv. campestris (strain 8004), this protein is Large ribosomal subunit protein bL9.